The chain runs to 165 residues: Xanthine-guanine phosphoribosyltransferase (165 aa).

5-phospho-alpha-D-ribose 1-diphosphate contacts are provided by residues 41 to 42 (RG) and 98 to 106 (DDLTDTGKT). Asp99 contributes to the Mg(2+) binding site. Asp102 and Ile145 together coordinate guanine. Residues Asp102 and Ile145 each contribute to the xanthine site. Residues 102–106 (DTGKT) and 144–145 (WI) contribute to the GMP site.

The protein belongs to the purine/pyrimidine phosphoribosyltransferase family. XGPT subfamily. In terms of assembly, homotetramer. Requires Mg(2+) as cofactor.

Its subcellular location is the cell inner membrane. The catalysed reaction is GMP + diphosphate = guanine + 5-phospho-alpha-D-ribose 1-diphosphate. It carries out the reaction XMP + diphosphate = xanthine + 5-phospho-alpha-D-ribose 1-diphosphate. The enzyme catalyses IMP + diphosphate = hypoxanthine + 5-phospho-alpha-D-ribose 1-diphosphate. The protein operates within purine metabolism; GMP biosynthesis via salvage pathway; GMP from guanine: step 1/1. It functions in the pathway purine metabolism; XMP biosynthesis via salvage pathway; XMP from xanthine: step 1/1. Purine salvage pathway enzyme that catalyzes the transfer of the ribosyl-5-phosphate group from 5-phospho-alpha-D-ribose 1-diphosphate (PRPP) to the N9 position of the 6-oxopurines guanine and xanthine to form the corresponding ribonucleotides GMP (guanosine 5'-monophosphate) and XMP (xanthosine 5'-monophosphate), with the release of PPi. To a lesser extent, also acts on hypoxanthine. This chain is Xanthine-guanine phosphoribosyltransferase, found in Agrobacterium fabrum (strain C58 / ATCC 33970) (Agrobacterium tumefaciens (strain C58)).